The sequence spans 1129 residues: Nuclear pore complex protein 15 (1129 aa).

This sequence belongs to the nucleoporin Nup133 family.

The protein resides in the nucleus envelope. It is found in the nucleus. The protein localises to the nuclear pore complex. Important for early nematode development. The protein is Nuclear pore complex protein 15 of Caenorhabditis elegans.